Consider the following 88-residue polypeptide: Small ribosomal subunit protein uS15 (88 aa).

The protein belongs to the universal ribosomal protein uS15 family. Part of the 30S ribosomal subunit. Forms a bridge to the 50S subunit in the 70S ribosome, contacting the 23S rRNA.

One of the primary rRNA binding proteins, it binds directly to 16S rRNA where it helps nucleate assembly of the platform of the 30S subunit by binding and bridging several RNA helices of the 16S rRNA. Functionally, forms an intersubunit bridge (bridge B4) with the 23S rRNA of the 50S subunit in the ribosome. In Mycoplasma mobile (strain ATCC 43663 / 163K / NCTC 11711) (Mesomycoplasma mobile), this protein is Small ribosomal subunit protein uS15.